The primary structure comprises 77 residues: Acyl carrier protein (77 aa).

The region spanning 2–77 is the Carrier domain; it reads SDIADRVKKI…DAVKFISEAA (76 aa). An O-(pantetheine 4'-phosphoryl)serine modification is found at Ser-37.

The protein belongs to the acyl carrier protein (ACP) family. Post-translationally, 4'-phosphopantetheine is transferred from CoA to a specific serine of apo-ACP by AcpS. This modification is essential for activity because fatty acids are bound in thioester linkage to the sulfhydryl of the prosthetic group.

Its subcellular location is the cytoplasm. Its pathway is lipid metabolism; fatty acid biosynthesis. Carrier of the growing fatty acid chain in fatty acid biosynthesis. The polypeptide is Acyl carrier protein (Cereibacter sphaeroides (strain ATCC 17029 / ATH 2.4.9) (Rhodobacter sphaeroides)).